A 146-amino-acid chain; its full sequence is Basic phospholipase A2 (146 aa).

A signal peptide spans 1 to 21; the sequence is MYPAHLLVLLAVCVSLLGAAS. Positions 22–27 are excised as a propeptide; sequence IPPLPL. 7 cysteine pairs are disulfide-bonded: C38–C98, C54–C145, C56–C72, C71–C126, C78–C119, C87–C112, and C105–C117. Ca(2+)-binding residues include Y55, G57, and G59. H75 is a catalytic residue. D76 is a binding site for Ca(2+). The active site involves D120.

This sequence belongs to the phospholipase A2 family. Group I subfamily. D49 sub-subfamily. It depends on Ca(2+) as a cofactor. As to expression, expressed by the venom gland.

It localises to the secreted. It carries out the reaction a 1,2-diacyl-sn-glycero-3-phosphocholine + H2O = a 1-acyl-sn-glycero-3-phosphocholine + a fatty acid + H(+). Functionally, snake venom phospholipase A2 (PLA2) that inhibits neuromuscular transmission by blocking acetylcholine release from the nerve termini. PLA2 catalyzes the calcium-dependent hydrolysis of the 2-acyl groups in 3-sn-phosphoglycerides. This is Basic phospholipase A2 from Hydrophis hardwickii (Hardwick's spine-bellied seasnake).